The chain runs to 229 residues: Ribonuclease 3 (229 aa).

Residues 5–127 (LDRLERKLGY…LIGAIYLDTG (123 aa)) form the RNase III domain. E40 is a Mg(2+) binding site. D44 is an active-site residue. The Mg(2+) site is built by D113 and E116. The active site involves E116. Residues 154-224 (DPKTRLQEFL…AAAALVALGV (71 aa)) form the DRBM domain.

The protein belongs to the ribonuclease III family. Homodimer. Mg(2+) is required as a cofactor.

The protein localises to the cytoplasm. The catalysed reaction is Endonucleolytic cleavage to 5'-phosphomonoester.. Functionally, digests double-stranded RNA. Involved in the processing of primary rRNA transcript to yield the immediate precursors to the large and small rRNAs (23S and 16S). Processes some mRNAs, and tRNAs when they are encoded in the rRNA operon. Processes pre-crRNA and tracrRNA of type II CRISPR loci if present in the organism. The sequence is that of Ribonuclease 3 from Pseudomonas aeruginosa (strain LESB58).